The chain runs to 390 residues: Chorismate synthase 2 (390 aa).

Arginine 39 and arginine 45 together coordinate NADP(+). FMN-binding positions include 132-134 (RSS), 253-254 (NA), glycine 298, 313-317 (KPIPT), and arginine 339.

The protein belongs to the chorismate synthase family. As to quaternary structure, homotetramer. FMNH2 is required as a cofactor.

It carries out the reaction 5-O-(1-carboxyvinyl)-3-phosphoshikimate = chorismate + phosphate. Its pathway is metabolic intermediate biosynthesis; chorismate biosynthesis; chorismate from D-erythrose 4-phosphate and phosphoenolpyruvate: step 7/7. In terms of biological role, catalyzes the anti-1,4-elimination of the C-3 phosphate and the C-6 proR hydrogen from 5-enolpyruvylshikimate-3-phosphate (EPSP) to yield chorismate, which is the branch point compound that serves as the starting substrate for the three terminal pathways of aromatic amino acid biosynthesis. This reaction introduces a second double bond into the aromatic ring system. This chain is Chorismate synthase 2, found in Bacillus cereus (strain ZK / E33L).